Here is a 408-residue protein sequence, read N- to C-terminus: Glutamate N-acetyltransferase (408 aa).

Residues threonine 150, lysine 176, threonine 189, glutamate 271, asparagine 403, and threonine 408 each coordinate substrate. Threonine 189 serves as the catalytic Nucleophile.

It belongs to the ArgJ family. In terms of assembly, heterotetramer of two alpha and two beta chains.

It is found in the cytoplasm. The enzyme catalyses N(2)-acetyl-L-ornithine + L-glutamate = N-acetyl-L-glutamate + L-ornithine. The protein operates within amino-acid biosynthesis; L-arginine biosynthesis; L-ornithine and N-acetyl-L-glutamate from L-glutamate and N(2)-acetyl-L-ornithine (cyclic): step 1/1. In terms of biological role, catalyzes the transfer of the acetyl group from N(2)-acetylornithine to glutamate, forming N-acetylglutamate and L-ornithine. This Methanococcus maripaludis (strain C7 / ATCC BAA-1331) protein is Glutamate N-acetyltransferase.